Consider the following 587-residue polypeptide: Phosphatidate phosphatase APP1 (587 aa).

Disordered regions lie at residues 1 to 28 (MNSQGYDESSSSTAATSGPTSGDPRMGK) and 150 to 178 (PPHLEEDSGDLNDSQSSIESSLSSKSENR). Composition is skewed to low complexity over residues 9-22 (SSSSTAATSGPTSG) and 163-174 (SQSSIESSLSSK). The DXDXT motif signature appears at 281 to 285 (DIDDT). The disordered stretch occupies residues 452 to 521 (QQRPMQMTKS…NRQLPNLDAN (70 aa)). The interaction with SH3 domain of ABP1 stretch occupies residues 467 to 483 (RRPPPPPIPSTQKPSLT).

In terms of assembly, monomer. Interacts with ABP1. Requires Mg(2+) as cofactor. In terms of processing, N-glycosylated.

The protein resides in the cytoplasm. It is found in the cytoskeleton. The protein localises to the actin patch. It carries out the reaction a 1,2-diacyl-sn-glycero-3-phosphate + H2O = a 1,2-diacyl-sn-glycerol + phosphate. The catalysed reaction is 1,2-di-(9Z-octadecenoyl)-sn-glycero-3-phosphate + H2O = 1,2-di-(9Z-octadecenoyl)-sn-glycerol + phosphate. Its activity is regulated as follows. Inhibited by N-ethylmaleimide. In terms of biological role, mg(2+)-dependent phosphatidate (PA) phosphatase which catalyzes the dephosphorylation of PA to yield diacylglycerol. May play a role in vesicular trafficking through its PAP activity at cortical actin patches. Can also utilize diacylglycerol pyrophosphate and lyso-PA as substrates with specificity constants 4- and 7-fold lower, respectively, when compared with PA. The polypeptide is Phosphatidate phosphatase APP1 (APP1) (Saccharomyces cerevisiae (strain ATCC 204508 / S288c) (Baker's yeast)).